The chain runs to 255 residues: Adenylate dimethylallyltransferase (255 aa).

It belongs to the isopentenyl transferase family.

The enzyme catalyses dimethylallyl diphosphate + AMP = N(6)-(dimethylallyl)adenosine 5'-phosphate + diphosphate. In terms of biological role, transfers dimethylallyl groups to AMP as part of the biosynthesis of cytokinin phytohormones. The polypeptide is Adenylate dimethylallyltransferase (fas4) (Rhodococcoides fascians (Rhodococcus fascians)).